The primary structure comprises 137 residues: Putative pre-16S rRNA nuclease (137 aa).

This sequence belongs to the YqgF nuclease family.

It is found in the cytoplasm. Its function is as follows. Could be a nuclease involved in processing of the 5'-end of pre-16S rRNA. This Clostridium perfringens (strain ATCC 13124 / DSM 756 / JCM 1290 / NCIMB 6125 / NCTC 8237 / Type A) protein is Putative pre-16S rRNA nuclease.